A 577-amino-acid polypeptide reads, in one-letter code: MNIFDLYLDKIIILIKKLNKDGSLELPESLNGVNVDIPPSNFDCDISTNVAMVLSKANKKSPIDIANILIELIKNEDEKIESISAAKPGFINIKFKTIYWNNFIKSINQNHKDYGVNNKEKKQKYLIEFVSANPTGPLHVGHCRGAILGDVISNILIFNKHDVSKEYYVNDYGNQILNFTKSVFFRIREILFNEKFPIENSDLYPGDYLVGIAKNIIKSNKVLKFDKFENVSKELTLLSVSESLKLIKNNLSNLGIVHDRFTSETDIVLNNEVQKAIDKLKEKKLVYSGKIKAPKGEDDENWVEREQLLFKSTDFGDDKDRALQKSDKSWTYFASDVAYHDNKLNRNYDTLINILGADHAGYIKRITSVVEALSGDKKKLICKVSQLVKLIKDGKPFKMSKRKGDYITVEDLIAEVGKDATRFIMLNRSSDVELDFDFTKVKEKSKDNPLYYVQYCYARISSVFRHVNLNIENDLNIKDYEFAYTGDEIKILKKIAEWPKCIEAASLRLEPHRIPVYLYELSSEFHSYWNMGKEDQSKRFINEQKKISNDKLVFLKVISNVIKSGMDIVGVDTPQKM.

A 'HIGH' region motif is present at residues 132-142; sequence ANPTGPLHVGH.

This sequence belongs to the class-I aminoacyl-tRNA synthetase family. In terms of assembly, monomer.

The protein localises to the cytoplasm. It catalyses the reaction tRNA(Arg) + L-arginine + ATP = L-arginyl-tRNA(Arg) + AMP + diphosphate. The protein is Arginine--tRNA ligase of Pelagibacter ubique (strain HTCC1062).